The following is a 116-amino-acid chain: NADH-ubiquinone oxidoreductase chain 3 (116 aa).

Transmembrane regions (helical) follow at residues 4–24 (LIIT…IAFW), 56–76 (FFLI…LLPL), and 88–108 (TLIL…YEWI).

This sequence belongs to the complex I subunit 3 family. As to quaternary structure, core subunit of respiratory chain NADH dehydrogenase (Complex I) which is composed of 45 different subunits. Interacts with TMEM186. Interacts with TMEM242.

It is found in the mitochondrion inner membrane. It catalyses the reaction a ubiquinone + NADH + 5 H(+)(in) = a ubiquinol + NAD(+) + 4 H(+)(out). Core subunit of the mitochondrial membrane respiratory chain NADH dehydrogenase (Complex I) which catalyzes electron transfer from NADH through the respiratory chain, using ubiquinone as an electron acceptor. Essential for the catalytic activity of complex I. The chain is NADH-ubiquinone oxidoreductase chain 3 from Osphranter robustus (Wallaroo).